The sequence spans 308 residues: Ribosomal RNA large subunit methyltransferase F (308 aa).

This sequence belongs to the methyltransferase superfamily. METTL16/RlmF family.

Its subcellular location is the cytoplasm. The enzyme catalyses adenosine(1618) in 23S rRNA + S-adenosyl-L-methionine = N(6)-methyladenosine(1618) in 23S rRNA + S-adenosyl-L-homocysteine + H(+). Specifically methylates the adenine in position 1618 of 23S rRNA. This Salmonella dublin (strain CT_02021853) protein is Ribosomal RNA large subunit methyltransferase F.